The sequence spans 286 residues: Elongation factor Ts (286 aa).

An involved in Mg(2+) ion dislocation from EF-Tu region spans residues 82 to 85; it reads TDFV.

The protein belongs to the EF-Ts family.

Its subcellular location is the cytoplasm. Its function is as follows. Associates with the EF-Tu.GDP complex and induces the exchange of GDP to GTP. It remains bound to the aminoacyl-tRNA.EF-Tu.GTP complex up to the GTP hydrolysis stage on the ribosome. This chain is Elongation factor Ts, found in Hahella chejuensis (strain KCTC 2396).